The sequence spans 232 residues: A-type ATP synthase subunit D (232 aa).

The interval Lys200–Asp232 is disordered. The segment covering Glu209–Asp222 has biased composition (acidic residues).

This sequence belongs to the V-ATPase D subunit family. Has multiple subunits with at least A(3), B(3), C, D, E, F, H, I and proteolipid K(x).

The protein localises to the cell membrane. Component of the A-type ATP synthase that produces ATP from ADP in the presence of a proton gradient across the membrane. The polypeptide is A-type ATP synthase subunit D (Haloquadratum walsbyi (strain DSM 16790 / HBSQ001)).